Consider the following 210-residue polypeptide: Thiamine-phosphate synthase (210 aa).

Residues 39–43 and Asn-71 contribute to the 4-amino-2-methyl-5-(diphosphooxymethyl)pyrimidine site; that span reads QLREK. Mg(2+) contacts are provided by Asp-72 and Asp-91. Ser-110 contributes to the 4-amino-2-methyl-5-(diphosphooxymethyl)pyrimidine binding site. 134–136 contacts 2-[(2R,5Z)-2-carboxy-4-methylthiazol-5(2H)-ylidene]ethyl phosphate; sequence TPT. Lys-137 contributes to the 4-amino-2-methyl-5-(diphosphooxymethyl)pyrimidine binding site. Gly-163 serves as a coordination point for 2-[(2R,5Z)-2-carboxy-4-methylthiazol-5(2H)-ylidene]ethyl phosphate.

This sequence belongs to the thiamine-phosphate synthase family. It depends on Mg(2+) as a cofactor.

It catalyses the reaction 2-[(2R,5Z)-2-carboxy-4-methylthiazol-5(2H)-ylidene]ethyl phosphate + 4-amino-2-methyl-5-(diphosphooxymethyl)pyrimidine + 2 H(+) = thiamine phosphate + CO2 + diphosphate. It carries out the reaction 2-(2-carboxy-4-methylthiazol-5-yl)ethyl phosphate + 4-amino-2-methyl-5-(diphosphooxymethyl)pyrimidine + 2 H(+) = thiamine phosphate + CO2 + diphosphate. The catalysed reaction is 4-methyl-5-(2-phosphooxyethyl)-thiazole + 4-amino-2-methyl-5-(diphosphooxymethyl)pyrimidine + H(+) = thiamine phosphate + diphosphate. The protein operates within cofactor biosynthesis; thiamine diphosphate biosynthesis; thiamine phosphate from 4-amino-2-methyl-5-diphosphomethylpyrimidine and 4-methyl-5-(2-phosphoethyl)-thiazole: step 1/1. Its function is as follows. Condenses 4-methyl-5-(beta-hydroxyethyl)thiazole monophosphate (THZ-P) and 2-methyl-4-amino-5-hydroxymethyl pyrimidine pyrophosphate (HMP-PP) to form thiamine monophosphate (TMP). This chain is Thiamine-phosphate synthase, found in Campylobacter jejuni subsp. jejuni serotype O:6 (strain 81116 / NCTC 11828).